We begin with the raw amino-acid sequence, 518 residues long: UPF0288 protein Mbar_A0706 (518 aa).

It belongs to the UPF0288 family.

The polypeptide is UPF0288 protein Mbar_A0706 (Methanosarcina barkeri (strain Fusaro / DSM 804)).